Consider the following 63-residue polypeptide: SSKWEACCDRCACTKSIPPQCHCADIRLNSCHSACESCACTRSIPAKCRCFDITDFCYKPCSG.

7 disulfide bridges follow: Cys7/Cys61, Cys8/Cys23, Cys11/Cys57, Cys13/Cys21, Cys31/Cys38, Cys35/Cys50, and Cys40/Cys48.

In terms of biological role, inhibits trypsin, chymotrypsin, plasmin and factor XIIa. Does not inhibit factor Xa, thrombin and plasma kallikrein. This is Bowman-birk type proteinase inhibitor from Amburana acreana (Cerejeira).